Consider the following 342-residue polypeptide: MLSNPSQVVLRNIELFESKNVLLINHECDLLATALLEDAAKVTTLALDFNHFQRIKSHENARLQCHFGHQLPSTQTFDAVVLFYPKSKSLAPYLLNLAGRHLIPGGELVIVGEKKGGIRSITKQLPDYFDGGIKLDNARHCMLYSSSLLSEAPEIKLSDWVKDYVLSTPQGELTICNLVGVFSEKRLDEGTELLLEHLPTLKGRVLDFGCGAGVITAALLKANPDLELECVDINAMALASCELTLAANGMQAKVYASDGLTQTQGMFDAIISNPPFHDGLDSTTEIATRFVQESEAQLKSGGIFQIVANRHLPYSDTIAKFFKTVNVAAENNKYKIYANRKA.

This sequence belongs to the methyltransferase superfamily. RsmC family. As to quaternary structure, monomer.

The protein resides in the cytoplasm. The catalysed reaction is guanosine(1207) in 16S rRNA + S-adenosyl-L-methionine = N(2)-methylguanosine(1207) in 16S rRNA + S-adenosyl-L-homocysteine + H(+). Functionally, specifically methylates the guanine in position 1207 of 16S rRNA in the 30S particle. The polypeptide is Ribosomal RNA small subunit methyltransferase C (Shewanella loihica (strain ATCC BAA-1088 / PV-4)).